A 1002-amino-acid polypeptide reads, in one-letter code: DNA-directed RNA polymerase 1B, mitochondrial (1002 aa).

The transit peptide at 1–21 (MWRYISKHAYSRKFRNSHDSA) directs the protein to the mitochondrion. Residues Asp-703, Lys-778, and Asp-935 contribute to the active site.

The protein belongs to the phage and mitochondrial RNA polymerase family.

Its subcellular location is the mitochondrion. The enzyme catalyses RNA(n) + a ribonucleoside 5'-triphosphate = RNA(n+1) + diphosphate. DNA-dependent RNA polymerase catalyzes the transcription of DNA into RNA using the four ribonucleoside triphosphates as substrates. The sequence is that of DNA-directed RNA polymerase 1B, mitochondrial (RPOT1-TOM) from Nicotiana tabacum (Common tobacco).